We begin with the raw amino-acid sequence, 671 residues long: DNA ligase (671 aa).

NAD(+) contacts are provided by residues 32–36 (DAEYD), 81–82 (SL), and glutamate 113. Lysine 115 serves as the catalytic N6-AMP-lysine intermediate. Arginine 136, glutamate 173, lysine 290, and lysine 314 together coordinate NAD(+). Zn(2+) contacts are provided by cysteine 408, cysteine 411, cysteine 426, and cysteine 432. Residues 593–671 (EIDSPFAGKT…EAEMLRLLGS (79 aa)) enclose the BRCT domain.

This sequence belongs to the NAD-dependent DNA ligase family. LigA subfamily. Requires Mg(2+) as cofactor. The cofactor is Mn(2+).

It catalyses the reaction NAD(+) + (deoxyribonucleotide)n-3'-hydroxyl + 5'-phospho-(deoxyribonucleotide)m = (deoxyribonucleotide)n+m + AMP + beta-nicotinamide D-nucleotide.. Functionally, DNA ligase that catalyzes the formation of phosphodiester linkages between 5'-phosphoryl and 3'-hydroxyl groups in double-stranded DNA using NAD as a coenzyme and as the energy source for the reaction. It is essential for DNA replication and repair of damaged DNA. This chain is DNA ligase, found in Shigella sonnei (strain Ss046).